We begin with the raw amino-acid sequence, 105 residues long: MAPGASAPAASRSEDEVGQKIDRCFADSLLKVTGGVAIGIVASVAFFKSRSWPIWFGSGVGLGTGWSNCRHDFASPYVLHGKRVPAGQDSQGKPAYNIITEQHKQ.

The helical transmembrane segment at L29 to F46 threads the bilayer. Residues F47 to Q105 are Mitochondrial intermembrane-facing. Positions P85–Q105 are disordered.

This sequence belongs to the MICOS complex subunit Mic10 family. In terms of assembly, component of the mitochondrial contact site and cristae organizing system (MICOS) complex.

It is found in the mitochondrion inner membrane. Component of the MICOS complex, a large protein complex of the mitochondrial inner membrane that plays crucial roles in the maintenance of crista junctions, inner membrane architecture, and formation of contact sites to the outer membrane. The chain is MICOS complex subunit Mic10 from Caenorhabditis elegans.